Reading from the N-terminus, the 489-residue chain is UDP-N-acetylmuramoyl-L-alanyl-D-glutamate--2,6-diaminopimelate ligase (489 aa).

Ser-30 contributes to the UDP-N-acetyl-alpha-D-muramoyl-L-alanyl-D-glutamate binding site. 113 to 119 (GTNGKTS) provides a ligand contact to ATP. UDP-N-acetyl-alpha-D-muramoyl-L-alanyl-D-glutamate is bound by residues 155-156 (TT), Ser-182, Gln-188, and Arg-190. At Lys-222 the chain carries N6-carboxylysine. Residues Arg-388, 412 to 415 (DNPR), Gly-463, and Glu-467 each bind meso-2,6-diaminopimelate. The Meso-diaminopimelate recognition motif signature appears at 412–415 (DNPR).

It belongs to the MurCDEF family. MurE subfamily. Mg(2+) serves as cofactor. Post-translationally, carboxylation is probably crucial for Mg(2+) binding and, consequently, for the gamma-phosphate positioning of ATP.

Its subcellular location is the cytoplasm. The enzyme catalyses UDP-N-acetyl-alpha-D-muramoyl-L-alanyl-D-glutamate + meso-2,6-diaminopimelate + ATP = UDP-N-acetyl-alpha-D-muramoyl-L-alanyl-gamma-D-glutamyl-meso-2,6-diaminopimelate + ADP + phosphate + H(+). Its pathway is cell wall biogenesis; peptidoglycan biosynthesis. In terms of biological role, catalyzes the addition of meso-diaminopimelic acid to the nucleotide precursor UDP-N-acetylmuramoyl-L-alanyl-D-glutamate (UMAG) in the biosynthesis of bacterial cell-wall peptidoglycan. The protein is UDP-N-acetylmuramoyl-L-alanyl-D-glutamate--2,6-diaminopimelate ligase of Coxiella burnetii (strain RSA 493 / Nine Mile phase I).